A 426-amino-acid chain; its full sequence is Glutamate-1-semialdehyde 2,1-aminomutase (426 aa).

Position 265 is an N6-(pyridoxal phosphate)lysine (Lys-265).

This sequence belongs to the class-III pyridoxal-phosphate-dependent aminotransferase family. HemL subfamily. In terms of assembly, homodimer. The cofactor is pyridoxal 5'-phosphate.

Its subcellular location is the cytoplasm. The enzyme catalyses (S)-4-amino-5-oxopentanoate = 5-aminolevulinate. It participates in porphyrin-containing compound metabolism; protoporphyrin-IX biosynthesis; 5-aminolevulinate from L-glutamyl-tRNA(Glu): step 2/2. The sequence is that of Glutamate-1-semialdehyde 2,1-aminomutase from Enterobacter sp. (strain 638).